Consider the following 312-residue polypeptide: Porphobilinogen deaminase (312 aa).

At cysteine 243 the chain carries S-(dipyrrolylmethanemethyl)cysteine.

Belongs to the HMBS family. Monomer. Requires dipyrromethane as cofactor.

It catalyses the reaction 4 porphobilinogen + H2O = hydroxymethylbilane + 4 NH4(+). It functions in the pathway porphyrin-containing compound metabolism; protoporphyrin-IX biosynthesis; coproporphyrinogen-III from 5-aminolevulinate: step 2/4. Functionally, tetrapolymerization of the monopyrrole PBG into the hydroxymethylbilane pre-uroporphyrinogen in several discrete steps. The polypeptide is Porphobilinogen deaminase (Vibrio vulnificus (strain CMCP6)).